The sequence spans 197 residues: Recombination protein RecR (197 aa).

The segment at 55–70 (CVQCRDFTESEICTIC) adopts a C4-type zinc-finger fold. Residues 78 to 173 (QQLCVVESPA…RPSRLAQGMP (96 aa)) form the Toprim domain.

It belongs to the RecR family.

May play a role in DNA repair. It seems to be involved in an RecBC-independent recombinational process of DNA repair. It may act with RecF and RecO. This chain is Recombination protein RecR, found in Xanthomonas axonopodis pv. citri (strain 306).